The following is a 79-amino-acid chain: Conotoxin 12 (79 aa).

The N-terminal stretch at 1 to 22 (MKLTCVLIITVLFLTASQLITA) is a signal peptide. The propeptide occupies 23 to 47 (DYSRDQRQYRAVRLGDEMRNFKGAR). Cystine bridges form between cysteine 49–cysteine 62, cysteine 56–cysteine 67, and cysteine 61–cysteine 77.

Belongs to the conotoxin O1 superfamily. As to expression, expressed by the venom duct.

It localises to the secreted. This Conus vexillum (Flag cone) protein is Conotoxin 12.